A 591-amino-acid chain; its full sequence is Guanylate-binding protein 2 (591 aa).

Positions 1-309 (MAPEINLPGP…NAISSGDLPC (309 aa)) are GTPase domain (Globular). The GB1/RHD3-type G domain maps to 35–276 (TQPVVVVAIV…FCSYILSHSN (242 aa)). GTP-binding positions include 45 to 52 (GLYRTGKS), 181 to 182 (RD), and L245. At C588 the chain carries Cysteine methyl ester. Residue C588 is the site of S-geranylgeranyl cysteine attachment. Residues 589–591 (NIL) constitute a propeptide, removed in mature form.

This sequence belongs to the TRAFAC class dynamin-like GTPase superfamily. GB1/RHD3 GTPase family. GB1 subfamily. Homodimer; homodimerization occurs upon GTP-binding and is required for the association with membranous structures. Heterodimer with other family members, including GBP1, GBP3, GBP4 and GBP5. Post-translationally, (Microbial infection) Ubiquitinated by S.flexneri IpaH9.8, leading to its degradation by the proteasome, thereby preventing its ability to promote host defense against bacterial infection. In terms of processing, isoprenylation is required for proper subcellular location.

Its subcellular location is the cytoplasmic vesicle membrane. The protein localises to the golgi apparatus membrane. It is found in the cytoplasm. The protein resides in the perinuclear region. The catalysed reaction is GTP + H2O = GDP + phosphate + H(+). In terms of biological role, interferon (IFN)-inducible GTPase that plays important roles in innate immunity against a diverse range of bacterial, viral and protozoan pathogens. Hydrolyzes GTP to GMP in 2 consecutive cleavage reactions, but the major reaction product is GDP. Following infection, recruited to the pathogen-containing vacuoles or vacuole-escaped bacteria and acts as a positive regulator of inflammasome assembly by promoting the release of inflammasome ligands from bacteria. Acts by promoting lysis of pathogen-containing vacuoles, releasing pathogens into the cytosol. Following pathogen release in the cytosol, promotes recruitment of proteins that mediate bacterial cytolysis: this liberates ligands that are detected by inflammasomes, such as lipopolysaccharide (LPS) that activates the non-canonical CASP4/CASP11 inflammasome or double-stranded DNA (dsDNA) that activates the AIM2 inflammasome. Confers protection to the protozoan pathogen Toxoplasma gondii. Independently of its GTPase activity, acts as an inhibitor of various viruses infectivity, such as HIV-1, Zika and influenza A viruses, by inhibiting FURIN-mediated maturation of viral envelope proteins. The sequence is that of Guanylate-binding protein 2 from Homo sapiens (Human).